The sequence spans 207 residues: Large ribosomal subunit protein uL4 (207 aa).

Residues 56 to 75 (EVSGTTKKPFKQKGTGNARQ) are disordered.

The protein belongs to the universal ribosomal protein uL4 family. Part of the 50S ribosomal subunit.

One of the primary rRNA binding proteins, this protein initially binds near the 5'-end of the 23S rRNA. It is important during the early stages of 50S assembly. It makes multiple contacts with different domains of the 23S rRNA in the assembled 50S subunit and ribosome. Functionally, forms part of the polypeptide exit tunnel. The sequence is that of Large ribosomal subunit protein uL4 from Rickettsia prowazekii (strain Madrid E).